The sequence spans 249 residues: Probable hydroxyacylglutathione hydrolase ECU02_0580 (249 aa).

The Zn(2+) site is built by His-75, His-77, Asp-79, His-80, His-126, Asp-144, and His-183. Substrate is bound by residues His-183–Tyr-185 and Arg-240–Lys-243.

The protein belongs to the metallo-beta-lactamase superfamily. Glyoxalase II family. Zn(2+) is required as a cofactor.

The protein localises to the cytoplasm. It is found in the nucleus. It catalyses the reaction an S-(2-hydroxyacyl)glutathione + H2O = a 2-hydroxy carboxylate + glutathione + H(+). It functions in the pathway secondary metabolite metabolism; methylglyoxal degradation; (R)-lactate from methylglyoxal: step 2/2. Its function is as follows. Thiolesterase that catalyzes the hydrolysis of S-D-lactoyl-glutathione to form glutathione and D-lactic acid. The polypeptide is Probable hydroxyacylglutathione hydrolase ECU02_0580 (Encephalitozoon cuniculi (strain GB-M1) (Microsporidian parasite)).